The chain runs to 308 residues: Shikimate kinase 1, chloroplastic (308 aa).

The N-terminal 62 residues, Met-1 to Arg-62, are a transit peptide targeting the chloroplast. Gly-103–Ser-110 serves as a coordination point for ATP. A Mg(2+)-binding site is contributed by Ser-110. Positions 128, 153, and 175 each coordinate substrate. Arg-214 contacts ATP.

This sequence belongs to the shikimate kinase family. It depends on Mg(2+) as a cofactor. Expressed in panicles.

It is found in the plastid. The protein localises to the chloroplast. The catalysed reaction is shikimate + ATP = 3-phosphoshikimate + ADP + H(+). It participates in metabolic intermediate biosynthesis; chorismate biosynthesis; chorismate from D-erythrose 4-phosphate and phosphoenolpyruvate: step 5/7. Catalyzes the specific phosphorylation of the 3-hydroxyl group of shikimic acid using ATP as a cosubstrate. This is Shikimate kinase 1, chloroplastic (SK1) from Oryza sativa subsp. japonica (Rice).